The chain runs to 261 residues: tRNA U34 carboxymethyltransferase (261 aa).

Carboxy-S-adenosyl-L-methionine contacts are provided by residues Lys-25, Trp-39, Lys-44, Gly-63, Val-114–Glu-115, Tyr-135, and Arg-250.

It belongs to the class I-like SAM-binding methyltransferase superfamily. CmoB family. In terms of assembly, homotetramer.

It carries out the reaction carboxy-S-adenosyl-L-methionine + 5-hydroxyuridine(34) in tRNA = 5-carboxymethoxyuridine(34) in tRNA + S-adenosyl-L-homocysteine + H(+). In terms of biological role, catalyzes carboxymethyl transfer from carboxy-S-adenosyl-L-methionine (Cx-SAM) to 5-hydroxyuridine (ho5U) to form 5-carboxymethoxyuridine (cmo5U) at position 34 in tRNAs. This Helicobacter pylori (strain HPAG1) protein is tRNA U34 carboxymethyltransferase.